The chain runs to 558 residues: Membrane protein insertase YidC (558 aa).

A run of 6 helical transmembrane segments spans residues Val-6 to Pro-26, Leu-326 to Phe-348, Gly-355 to Phe-377, Leu-424 to Ile-444, Val-469 to Ile-489, and Ile-512 to Val-532.

Belongs to the OXA1/ALB3/YidC family. Type 1 subfamily. As to quaternary structure, interacts with the Sec translocase complex via SecD. Specifically interacts with transmembrane segments of nascent integral membrane proteins during membrane integration.

The protein localises to the cell inner membrane. In terms of biological role, required for the insertion and/or proper folding and/or complex formation of integral membrane proteins into the membrane. Involved in integration of membrane proteins that insert both dependently and independently of the Sec translocase complex, as well as at least some lipoproteins. Aids folding of multispanning membrane proteins. This Pelagibacter ubique (strain HTCC1062) protein is Membrane protein insertase YidC.